Consider the following 447-residue polypeptide: Ribosomal protein uS12 methylthiotransferase RimO (447 aa).

In terms of domain architecture, MTTase N-terminal spans 4 to 114 (PKVGFVSLGC…VMEAVHEYVP (111 aa)). Positions 13, 49, 78, 147, 151, and 154 each coordinate [4Fe-4S] cluster. In terms of domain architecture, Radical SAM core spans 133 to 370 (LTPKHYAYLK…MQVQQQISAA (238 aa)). Residues 373 to 443 (QKRIGQTMTV…EYDLFAKLIK (71 aa)) enclose the TRAM domain.

This sequence belongs to the methylthiotransferase family. RimO subfamily. The cofactor is [4Fe-4S] cluster.

It localises to the cytoplasm. It catalyses the reaction L-aspartate(89)-[ribosomal protein uS12]-hydrogen + (sulfur carrier)-SH + AH2 + 2 S-adenosyl-L-methionine = 3-methylsulfanyl-L-aspartate(89)-[ribosomal protein uS12]-hydrogen + (sulfur carrier)-H + 5'-deoxyadenosine + L-methionine + A + S-adenosyl-L-homocysteine + 2 H(+). In terms of biological role, catalyzes the methylthiolation of an aspartic acid residue of ribosomal protein uS12. In Acinetobacter baumannii (strain AB0057), this protein is Ribosomal protein uS12 methylthiotransferase RimO.